Consider the following 600-residue polypeptide: MATEHIENKLKLLPDKPGCYLMKDVNGNVIYVGKSKNLKNRVRSYFKSKQVGRRAELVREIRDFDIITVSSDKESFLLEITLIKKYQPYYNVQLKQGTGYPYIEITNERDPQTRLTSIVHKDHGYYFGPYPNVYAAQATLKFIQKVWPLRRCTGHQGRPCLYYHMGQCLGACFKEVPKSTYDAQIRKIKRFLNGDIAQVKQDLTEKMTQASMDLEFERAAEIRDQLKYIEQTVEKQKIISNDHTQRDIFNFYVDKSWISIQIFFLRQAKLLRRETRLFPLTDTNDPQDAFVSFIAQFYGQRNRVLPKEVLVPAGMDNESLSEVLKVPVRTPQRGQKKALLEMAHDNAKLKLDEKFRLLELGNRKTKGAQKEIFDALGLPYGHRIESFDHSHIQGADPVSALVVFTDGEADKHEYRKYKLKGEVEHQNAADEVGNTREVVRRRYSRLLKEHKKMPDLILMDGGQIQVEACLDVLRNELNVNIPVAGMVKDDHHRTNHLIFGDPTKGEELKLIPLDPKSEGFYLMTRIQDEVHRFAITFHRRTHAKNALSSKLDEIKGIGPKSRNKLLRKFGSLKKIKEASVDELREAGLTLPQAQTVKLSL.

Positions 15 to 92 (DKPGCYLMKD…IKKYQPYYNV (78 aa)) constitute a GIY-YIG domain. Residues 197–232 (AQVKQDLTEKMTQASMDLEFERAAEIRDQLKYIEQT) enclose the UVR domain.

Belongs to the UvrC family. In terms of assembly, interacts with UvrB in an incision complex.

It is found in the cytoplasm. In terms of biological role, the UvrABC repair system catalyzes the recognition and processing of DNA lesions. UvrC both incises the 5' and 3' sides of the lesion. The N-terminal half is responsible for the 3' incision and the C-terminal half is responsible for the 5' incision. This is UvrABC system protein C from Lactobacillus johnsonii (strain CNCM I-12250 / La1 / NCC 533).